A 184-amino-acid polypeptide reads, in one-letter code: Photosystem I assembly protein Ycf4 (184 aa).

The next 2 membrane-spanning stretches (helical) occupy residues 21–41 (YFWA…GLSS) and 63–83 (IIMT…WLTI).

Belongs to the Ycf4 family.

It localises to the plastid. Its subcellular location is the chloroplast thylakoid membrane. Functionally, seems to be required for the assembly of the photosystem I complex. In Gracilaria tenuistipitata var. liui (Red alga), this protein is Photosystem I assembly protein Ycf4.